Consider the following 213-residue polypeptide: Uridine kinase (213 aa).

Residue 13-20 (GASASGKS) participates in ATP binding.

This sequence belongs to the uridine kinase family.

The protein localises to the cytoplasm. It carries out the reaction uridine + ATP = UMP + ADP + H(+). The catalysed reaction is cytidine + ATP = CMP + ADP + H(+). It functions in the pathway pyrimidine metabolism; CTP biosynthesis via salvage pathway; CTP from cytidine: step 1/3. Its pathway is pyrimidine metabolism; UMP biosynthesis via salvage pathway; UMP from uridine: step 1/1. In Haemophilus influenzae (strain PittEE), this protein is Uridine kinase.